A 231-amino-acid polypeptide reads, in one-letter code: PIAGSMVLAAILLKLGGYGIIRMMQVLPTTKTDMFLPFIVLALWGAILANLTCLQQTDLKSLIAYSSISHMGLVVATIIIQTPWGLSGALALMIAHGFTSSALFCLANTTYERTHTRILILTRGLHNILPMATTWWLLANLMNIAIPPTMNFTGELLITSALFNWCPTTIIMLGLSMLITASYSLHMFLSTQMGQTTLNNQTEPTHSREHLLMTLHLIPLMMISMKPELII.

6 helical membrane passes run 1-21 (PIAG…YGII), 34-54 (MFLP…LTCL), 63-85 (IAYS…TPWG), 89-111 (ALAL…NTTY), 128-148 (ILPM…AIPP), and 169-189 (TIIM…HMFL).

Belongs to the complex I subunit 4 family.

The protein localises to the mitochondrion membrane. It carries out the reaction a ubiquinone + NADH + 5 H(+)(in) = a ubiquinol + NAD(+) + 4 H(+)(out). Core subunit of the mitochondrial membrane respiratory chain NADH dehydrogenase (Complex I) that is believed to belong to the minimal assembly required for catalysis. Complex I functions in the transfer of electrons from NADH to the respiratory chain. The immediate electron acceptor for the enzyme is believed to be ubiquinone. The chain is NADH-ubiquinone oxidoreductase chain 4 (MT-ND4) from Bothrocophias hyoprora (Amazonian hognose viper).